A 141-amino-acid polypeptide reads, in one-letter code: Hemoglobin subunit alpha (141 aa).

Residues 1–141 (VLSAADKGNV…VSTVLTSKYR (141 aa)) form the Globin domain. A Phosphoserine modification is found at S3. N6-succinyllysine is present on residues K7 and K11. An N6-acetyllysine; alternate modification is found at K16. At K16 the chain carries N6-succinyllysine; alternate. A Phosphotyrosine modification is found at Y24. The residue at position 35 (S35) is a Phosphoserine. K40 is subject to N6-succinyllysine. Residue H58 participates in O2 binding. Heme b is bound at residue H87. At S102 the chain carries Phosphoserine. T108 carries the phosphothreonine modification. S124 and S131 each carry phosphoserine. Residues T134 and T137 each carry the phosphothreonine modification. S138 carries the post-translational modification Phosphoserine.

It belongs to the globin family. Heterotetramer of two alpha chains and two beta chains. In terms of tissue distribution, red blood cells.

In terms of biological role, involved in oxygen transport from the lung to the various peripheral tissues. Functionally, hemopressin acts as an antagonist peptide of the cannabinoid receptor CNR1. Hemopressin-binding efficiently blocks cannabinoid receptor CNR1 and subsequent signaling. This Macrotus californicus (Californian leaf-nosed bat) protein is Hemoglobin subunit alpha (HBA).